We begin with the raw amino-acid sequence, 203 residues long: ATP phosphoribosyltransferase (203 aa).

This sequence belongs to the ATP phosphoribosyltransferase family. Short subfamily.

Its subcellular location is the cytoplasm. The catalysed reaction is 1-(5-phospho-beta-D-ribosyl)-ATP + diphosphate = 5-phospho-alpha-D-ribose 1-diphosphate + ATP. Its pathway is amino-acid biosynthesis; L-histidine biosynthesis; L-histidine from 5-phospho-alpha-D-ribose 1-diphosphate: step 1/9. Catalyzes the condensation of ATP and 5-phosphoribose 1-diphosphate to form N'-(5'-phosphoribosyl)-ATP (PR-ATP). Has a crucial role in the pathway because the rate of histidine biosynthesis seems to be controlled primarily by regulation of HisG enzymatic activity. The protein is ATP phosphoribosyltransferase of Thermococcus kodakarensis (strain ATCC BAA-918 / JCM 12380 / KOD1) (Pyrococcus kodakaraensis (strain KOD1)).